We begin with the raw amino-acid sequence, 552 residues long: Glycosyltransferase family 92 protein RCOM_0530710 (552 aa).

A helical; Signal-anchor transmembrane segment spans residues 12–34 (WNRFFWCTLLLVLSCVLFTASTF). One can recognise a GT92 domain in the interval 277–520 (KPHEMCICTM…GTRAVEPPDW (244 aa)).

It belongs to the glycosyltransferase 92 family.

The protein resides in the membrane. This is Glycosyltransferase family 92 protein RCOM_0530710 from Ricinus communis (Castor bean).